The sequence spans 188 residues: Large ribosomal subunit protein bL35m (188 aa).

Belongs to the bacterial ribosomal protein bL35 family.

The protein resides in the mitochondrion. The protein is Large ribosomal subunit protein bL35m (Mrpl35) of Mus musculus (Mouse).